A 204-amino-acid chain; its full sequence is Holliday junction branch migration complex subunit RuvA (204 aa).

The interval 1–67 (MIDYLYGTLD…GGVISLYGFF (67 aa)) is domain I. The domain II stretch occupies residues 68–149 (TIEEREMYLL…TVNVLNKEKQ (82 aa)). The flexible linker stretch occupies residues 150 to 154 (TGAET). The domain III stretch occupies residues 155-204 (IKNTMVSEAIAGLITLGYKMQQARVAVTNVYEHNENITLEDLIKKSLQYL).

This sequence belongs to the RuvA family. As to quaternary structure, homotetramer. Forms an RuvA(8)-RuvB(12)-Holliday junction (HJ) complex. HJ DNA is sandwiched between 2 RuvA tetramers; dsDNA enters through RuvA and exits via RuvB. An RuvB hexamer assembles on each DNA strand where it exits the tetramer. Each RuvB hexamer is contacted by two RuvA subunits (via domain III) on 2 adjacent RuvB subunits; this complex drives branch migration. In the full resolvosome a probable DNA-RuvA(4)-RuvB(12)-RuvC(2) complex forms which resolves the HJ.

The protein resides in the cytoplasm. Its function is as follows. The RuvA-RuvB-RuvC complex processes Holliday junction (HJ) DNA during genetic recombination and DNA repair, while the RuvA-RuvB complex plays an important role in the rescue of blocked DNA replication forks via replication fork reversal (RFR). RuvA specifically binds to HJ cruciform DNA, conferring on it an open structure. The RuvB hexamer acts as an ATP-dependent pump, pulling dsDNA into and through the RuvAB complex. HJ branch migration allows RuvC to scan DNA until it finds its consensus sequence, where it cleaves and resolves the cruciform DNA. The polypeptide is Holliday junction branch migration complex subunit RuvA (Endomicrobium trichonymphae).